The chain runs to 463 residues: Retinoic acid receptor RXR-gamma (463 aa).

Residues 1–138 are modulating; sequence MYGNYSHFMK…TSPGSLVKHI (138 aa). Residues 16–53 are disordered; sequence GGSPGHTGSTSMSPSVALPTGKPMDSHPSYTDTPVSAP. NR C4-type zinc fingers lie at residues 139-159 and 175-199; these read CAIC…CEGC and CRDN…YQKC. Positions 139–204 form a DNA-binding region, nuclear receptor; sequence CAICGDRSSG…RYQKCLVMGM (66 aa). Residues 205 to 230 form a hinge region; the sequence is KREAVQEERQRSRERAESEAECASSS. Over residues 211 to 222 the composition is skewed to basic and acidic residues; it reads EERQRSRERAES. The disordered stretch occupies residues 211–232; sequence EERQRSRERAESEAECASSSHE. The region spanning 231–459 is the NR LBD domain; the sequence is HEDMPVERIL…SFLMEMLETP (229 aa).

It belongs to the nuclear hormone receptor family. NR2 subfamily. Homodimer. Heterodimer with a RAR molecule. Binds DNA preferentially as a RAR/RXR heterodimer. Interacts with RARA. In terms of processing, acetylated by EP300.

It is found in the nucleus. Its subcellular location is the cytoplasm. Its function is as follows. Receptor for retinoic acid. Retinoic acid receptors bind as heterodimers to their target response elements in response to their ligands, all-trans or 9-cis retinoic acid, and regulate gene expression in various biological processes. The RAR/RXR heterodimers bind to the retinoic acid response elements (RARE) composed of tandem 5'-AGGTCA-3' sites known as DR1-DR5. The high affinity ligand for RXRs is 9-cis retinoic acid. This chain is Retinoic acid receptor RXR-gamma (Rxrg), found in Mus musculus (Mouse).